The chain runs to 904 residues: Protein translocase subunit SecA (904 aa).

Residues glutamine 87, 105–109 (GEGKT), and aspartate 512 contribute to the ATP site. Residues 851 to 904 (LAKQQQLSHESDNSALMSQEEANVAASLERKVGRNDPCPCGSGKKYKQCHGRLQ) form a disordered region. Residues 853-871 (KQQQLSHESDNSALMSQEE) are compositionally biased toward polar residues. Zn(2+)-binding residues include cysteine 888, cysteine 890, cysteine 899, and histidine 900. The segment covering 894–904 (KKYKQCHGRLQ) has biased composition (basic residues).

This sequence belongs to the SecA family. Monomer and homodimer. Part of the essential Sec protein translocation apparatus which comprises SecA, SecYEG and auxiliary proteins SecDF-YajC and YidC. The cofactor is Zn(2+).

The protein localises to the cell inner membrane. The protein resides in the cytoplasm. The catalysed reaction is ATP + H2O + cellular proteinSide 1 = ADP + phosphate + cellular proteinSide 2.. Functionally, part of the Sec protein translocase complex. Interacts with the SecYEG preprotein conducting channel. Has a central role in coupling the hydrolysis of ATP to the transfer of proteins into and across the cell membrane, serving both as a receptor for the preprotein-SecB complex and as an ATP-driven molecular motor driving the stepwise translocation of polypeptide chains across the membrane. The protein is Protein translocase subunit SecA of Yersinia enterocolitica serotype O:8 / biotype 1B (strain NCTC 13174 / 8081).